The primary structure comprises 395 residues: Phosphoserine aminotransferase (395 aa).

A Phosphothreonine modification is found at Thr-20. Gly-80–Thr-81 provides a ligand contact to pyridoxal 5'-phosphate. Ser-112 is modified (phosphoserine). Pyridoxal 5'-phosphate contacts are provided by Trp-113, Thr-170, Asp-194, and Gln-217. N6-(pyridoxal phosphate)lysine is present on Lys-218. Asn-271–Thr-272 is a pyridoxal 5'-phosphate binding site.

Belongs to the class-V pyridoxal-phosphate-dependent aminotransferase family. SerC subfamily. In terms of assembly, homodimer. It depends on pyridoxal 5'-phosphate as a cofactor.

It catalyses the reaction O-phospho-L-serine + 2-oxoglutarate = 3-phosphooxypyruvate + L-glutamate. The enzyme catalyses 4-(phosphooxy)-L-threonine + 2-oxoglutarate = (R)-3-hydroxy-2-oxo-4-phosphooxybutanoate + L-glutamate. Its pathway is amino-acid biosynthesis; L-serine biosynthesis; L-serine from 3-phospho-D-glycerate: step 2/3. Its function is as follows. Phosphoserine aminotransferase (PSAT) is a pyridoxal 5'-phosphate-dependent enzyme involved in the second step of the phosphorylated pathway of serine biosynthesis. Catalyzes the reversible conversion of 3-phosphohydroxypyruvate to phosphoserine and of 3-hydroxy-2-oxo-4-phosphonooxybutanoate to phosphohydroxythreonine. Plays an indirect role in purine biosynthesis. The sequence is that of Phosphoserine aminotransferase from Saccharomyces cerevisiae (strain ATCC 204508 / S288c) (Baker's yeast).